Here is a 29-residue protein sequence, read N- to C-terminus: Kunitz-type trypsin inhibitor IVTI (29 aa).

It belongs to the protease inhibitor I3 (leguminous Kunitz-type inhibitor) family. In terms of assembly, monomer and dimer.

Inhibits bovine trypsin but not chymotrypsin. Also inhibits trypsin-like enzymes from midgut of several lepidopteran species and inhibits larval development in those species. Has fungicidal activity against yeast C.buinensis. Has a bacteriostatic effect against E.coli. Is not cytotoxic. This is Kunitz-type trypsin inhibitor IVTI from Inga vera (River koko).